The chain runs to 147 residues: Large ribosomal subunit protein bL9 (147 aa).

This sequence belongs to the bacterial ribosomal protein bL9 family.

Binds to the 23S rRNA. The sequence is that of Large ribosomal subunit protein bL9 from Clostridium botulinum (strain 657 / Type Ba4).